Here is a 423-residue protein sequence, read N- to C-terminus: Histidine--tRNA ligase (423 aa).

It belongs to the class-II aminoacyl-tRNA synthetase family. In terms of assembly, homodimer.

It localises to the cytoplasm. It catalyses the reaction tRNA(His) + L-histidine + ATP = L-histidyl-tRNA(His) + AMP + diphosphate + H(+). This Moorella thermoacetica (strain ATCC 39073 / JCM 9320) protein is Histidine--tRNA ligase.